The following is a 126-amino-acid chain: Aspartate 1-decarboxylase (126 aa).

The Schiff-base intermediate with substrate; via pyruvic acid role is filled by serine 25. Serine 25 bears the Pyruvic acid (Ser) mark. Position 57 (threonine 57) interacts with substrate. Tyrosine 58 functions as the Proton donor in the catalytic mechanism. 73–75 (GAA) provides a ligand contact to substrate.

This sequence belongs to the PanD family. In terms of assembly, heterooctamer of four alpha and four beta subunits. It depends on pyruvate as a cofactor. Post-translationally, is synthesized initially as an inactive proenzyme, which is activated by self-cleavage at a specific serine bond to produce a beta-subunit with a hydroxyl group at its C-terminus and an alpha-subunit with a pyruvoyl group at its N-terminus.

The protein localises to the cytoplasm. It carries out the reaction L-aspartate + H(+) = beta-alanine + CO2. It participates in cofactor biosynthesis; (R)-pantothenate biosynthesis; beta-alanine from L-aspartate: step 1/1. Functionally, catalyzes the pyruvoyl-dependent decarboxylation of aspartate to produce beta-alanine. This chain is Aspartate 1-decarboxylase, found in Psychrobacter arcticus (strain DSM 17307 / VKM B-2377 / 273-4).